The sequence spans 596 residues: Polyphenol oxidase B, chloroplastic (596 aa).

The segment at 1-23 (MASVVCNSSSSTTTTTLKTPFTS) is disordered. A chloroplast-targeting transit peptide spans 1–87 (MASVVCNSSS…ANAIPLAASA (87 aa)). Residues 8–23 (SSSSTTTTTLKTPFTS) are compositionally biased toward low complexity. Disulfide bonds link C98-C114 and C113-C182. Cu cation-binding residues include H181, H199, H208, H329, H333, and H371. A cross-link (2'-(S-cysteinyl)-histidine (Cys-His)) is located at residues 185–199 (CNGAYIIGGKELQVH).

Belongs to the tyrosinase family. It depends on Cu(2+) as a cofactor.

It localises to the plastid. The protein resides in the chloroplast thylakoid lumen. It carries out the reaction 2 catechol + O2 = 2 1,2-benzoquinone + 2 H2O. Its function is as follows. Catalyzes the oxidation of mono- and o-diphenols to o-diquinones. This is Polyphenol oxidase B, chloroplastic from Solanum lycopersicum (Tomato).